A 533-amino-acid polypeptide reads, in one-letter code: Cytochrome P450 9e2 (533 aa).

Cysteine 475 is a binding site for heme.

Belongs to the cytochrome P450 family. Requires heme as cofactor.

The protein localises to the endoplasmic reticulum membrane. It localises to the microsome membrane. The chain is Cytochrome P450 9e2 (CYP9E2) from Blattella germanica (German cockroach).